An 894-amino-acid polypeptide reads, in one-letter code: Septin and tuftelin-interacting protein 1 homolog (894 aa).

Disordered regions lie at residues 71-149 and 187-225; these read YEPN…DKPV and NAGL…RSLG. Positions 73–84 are enriched in basic and acidic residues; sequence PNEHKLKNKDGE. Residues 97–126 show a composition bias toward basic residues; the sequence is KKKKKEKKEKKQKKKEKKEKKEKKNKKKNK. The region spanning 149–195 is the G-patch domain; sequence VGGIGAALLSKMGYKGTGGLGRDGGGMVEPIKVQVRPKNAGLASVTE. Positions 202–217 are enriched in acidic residues; sequence DDSDDSDQSEGDTDSD. A coiled-coil region spans residues 329-449; sequence KQIDIQNQDN…SDNNDNSSLE (121 aa). The disordered stretch occupies residues 785-821; it reads NNNNNNNINNSYQQQNQQQPIKPISSPSLNSSNNNNI.

The protein belongs to the TFP11/STIP family. As to quaternary structure, identified in the spliceosome C complex.

The protein resides in the cytoplasm. It localises to the nucleus. Its function is as follows. May be involved in pre-mRNA splicing. The polypeptide is Septin and tuftelin-interacting protein 1 homolog (stip-1) (Dictyostelium discoideum (Social amoeba)).